The following is a 397-amino-acid chain: MWKNRKIDWLILGPYLALSIVGLLEIYSASSYRLLVAGSDPKSLFIRQFLFIILSWGVIVLTYSIRLQVLLKPRIIKAGLIVSGLLLAMMKLGIFAVTVNGAQRWVSIAGIQFQPSEIATIFLILYLSRFFRNDRSVPEKLHIPVLIVGGIAVLVLFQPKIAGALMILAIAGAIFWAAAIPIKKGLIIIGAAIASLILVAGLVLLLEKHHLLPSFFEHAYDRIAMVHNPFLDEHGAGYQMSNSYYALYNGGLFGRGMGNSITKKGYLPESETDFIFSVIAEEFGLIGALLVLFLLFLLCMRIFQKSTKQKNQQANLILIGVGTWILVQTSINIGSILGLIPMTGVPLPFVSYGGTSYLILSFAIGLALNISSRQVKEKNKQVERLQLKKPKLLNKNN.

Residues 1-6 (MWKNRK) lie on the Cytoplasmic side of the membrane. A helical transmembrane segment spans residues 7-27 (IDWLILGPYLALSIVGLLEIY). Residues 28 to 44 (SASSYRLLVAGSDPKSL) are Extracellular-facing. Residues 45–65 (FIRQFLFIILSWGVIVLTYSI) form a helical membrane-spanning segment. At 66-78 (RLQVLLKPRIIKA) the chain is on the cytoplasmic side. The chain crosses the membrane as a helical span at residues 79-99 (GLIVSGLLLAMMKLGIFAVTV). The Extracellular segment spans residues 100-104 (NGAQR). Residues 105 to 125 (WVSIAGIQFQPSEIATIFLIL) traverse the membrane as a helical segment. The Cytoplasmic segment spans residues 126-136 (YLSRFFRNDRS). A helical membrane pass occupies residues 137–157 (VPEKLHIPVLIVGGIAVLVLF). Over 158–160 (QPK) the chain is Extracellular. The chain crosses the membrane as a helical span at residues 161-181 (IAGALMILAIAGAIFWAAAIP). Residues 182–185 (IKKG) lie on the Cytoplasmic side of the membrane. Residues 186 to 206 (LIIIGAAIASLILVAGLVLLL) form a helical membrane-spanning segment. Residues 207–277 (EKHHLLPSFF…PESETDFIFS (71 aa)) lie on the Extracellular side of the membrane. A helical membrane pass occupies residues 278–298 (VIAEEFGLIGALLVLFLLFLL). The Cytoplasmic portion of the chain corresponds to 299 to 315 (CMRIFQKSTKQKNQQAN). The helical transmembrane segment at 316–336 (LILIGVGTWILVQTSINIGSI) threads the bilayer. Residues 337 to 346 (LGLIPMTGVP) are Extracellular-facing. A helical transmembrane segment spans residues 347–367 (LPFVSYGGTSYLILSFAIGLA). Topologically, residues 368-397 (LNISSRQVKEKNKQVERLQLKKPKLLNKNN) are cytoplasmic.

Belongs to the SEDS family. FtsW subfamily.

The protein resides in the cell membrane. The catalysed reaction is [GlcNAc-(1-&gt;4)-Mur2Ac(oyl-L-Ala-gamma-D-Glu-L-Lys-D-Ala-D-Ala)](n)-di-trans,octa-cis-undecaprenyl diphosphate + beta-D-GlcNAc-(1-&gt;4)-Mur2Ac(oyl-L-Ala-gamma-D-Glu-L-Lys-D-Ala-D-Ala)-di-trans,octa-cis-undecaprenyl diphosphate = [GlcNAc-(1-&gt;4)-Mur2Ac(oyl-L-Ala-gamma-D-Glu-L-Lys-D-Ala-D-Ala)](n+1)-di-trans,octa-cis-undecaprenyl diphosphate + di-trans,octa-cis-undecaprenyl diphosphate + H(+). Its pathway is cell wall biogenesis; peptidoglycan biosynthesis. Its function is as follows. Peptidoglycan polymerase that is essential for cell division. The chain is Probable peptidoglycan glycosyltransferase FtsW (ftsW) from Enterococcus hirae.